The sequence spans 485 residues: Adenosylhomocysteinase (485 aa).

Positions 64, 139, and 205 each coordinate substrate. 206 to 208 contributes to the NAD(+) binding site; it reads TTT. The substrate site is built by Lys235 and Asp239. Residues Asn240, 269–274, Glu292, Asn327, 348–350, and Asn397 each bind NAD(+); these read GYGDVG and IGH.

This sequence belongs to the adenosylhomocysteinase family. In terms of assembly, homotetramer. NAD(+) serves as cofactor. Mainly in floral buds and stems.

The enzyme catalyses S-adenosyl-L-homocysteine + H2O = L-homocysteine + adenosine. It functions in the pathway amino-acid biosynthesis; L-homocysteine biosynthesis; L-homocysteine from S-adenosyl-L-homocysteine: step 1/1. Functionally, adenosylhomocysteine is a competitive inhibitor of S-adenosyl-L-methionine-dependent methyl transferase reactions; therefore adenosylhomocysteinase may play a key role in the control of methylations via regulation of the intracellular concentration of adenosylhomocysteine. This Petroselinum crispum (Parsley) protein is Adenosylhomocysteinase (SAHH).